The chain runs to 325 residues: Beta-ketoacyl-[acyl-carrier-protein] synthase III (325 aa).

Catalysis depends on residues Cys-116 and His-252. The segment at 253 to 257 (QANLR) is ACP-binding. Asn-282 is an active-site residue.

The protein belongs to the thiolase-like superfamily. FabH family. Homodimer.

Its subcellular location is the cytoplasm. It carries out the reaction malonyl-[ACP] + acetyl-CoA + H(+) = 3-oxobutanoyl-[ACP] + CO2 + CoA. It participates in lipid metabolism; fatty acid biosynthesis. Catalyzes the condensation reaction of fatty acid synthesis by the addition to an acyl acceptor of two carbons from malonyl-ACP. Catalyzes the first condensation reaction which initiates fatty acid synthesis and may therefore play a role in governing the total rate of fatty acid production. Possesses both acetoacetyl-ACP synthase and acetyl transacylase activities. Its substrate specificity determines the biosynthesis of branched-chain and/or straight-chain of fatty acids. This is Beta-ketoacyl-[acyl-carrier-protein] synthase III from Xanthomonas oryzae pv. oryzae (strain MAFF 311018).